Reading from the N-terminus, the 332-residue chain is Phosphate acyltransferase (332 aa).

It belongs to the PlsX family. As to quaternary structure, homodimer. Probably interacts with PlsY.

The protein localises to the cytoplasm. It carries out the reaction a fatty acyl-[ACP] + phosphate = an acyl phosphate + holo-[ACP]. Its pathway is lipid metabolism; phospholipid metabolism. Its function is as follows. Catalyzes the reversible formation of acyl-phosphate (acyl-PO(4)) from acyl-[acyl-carrier-protein] (acyl-ACP). This enzyme utilizes acyl-ACP as fatty acyl donor, but not acyl-CoA. The protein is Phosphate acyltransferase of Fusobacterium nucleatum subsp. nucleatum (strain ATCC 25586 / DSM 15643 / BCRC 10681 / CIP 101130 / JCM 8532 / KCTC 2640 / LMG 13131 / VPI 4355).